A 208-amino-acid chain; its full sequence is Glutathione S-transferase F6 (208 aa).

The GST N-terminal domain occupies 2 to 83; it reads AGIKVFGHPA…YIAHEFSDKG (82 aa). Glutathione is bound by residues 12-13, 41-42, 54-55, and 67-68; these read ST, HK, KV, and ES. Positions 89 to 208 constitute a GST C-terminal domain; sequence TGKDMAIIAM…TSRPSAQKVL (120 aa).

This sequence belongs to the GST superfamily. Phi family.

The protein resides in the cytoplasm. The protein localises to the cytosol. The enzyme catalyses RX + glutathione = an S-substituted glutathione + a halide anion + H(+). Functionally, involved in camalexin biosynthesis by probably catalyzing the conjugation of GSH with indole-3-acetonitrile (IAN). May be involved in the conjugation of reduced glutathione to a wide number of exogenous and endogenous hydrophobic electrophiles and have a detoxification role against certain herbicides. In Arabidopsis thaliana (Mouse-ear cress), this protein is Glutathione S-transferase F6 (GSTF6).